The following is a 439-amino-acid chain: Ectonucleotide pyrophosphatase/phosphodiesterase family member 7 (439 aa).

The first 21 residues, 1-21 (MGHSAVLLCVALAILPACVTG), serve as a signal peptide directing secretion. Topologically, residues 22-414 (APVQRQHKLL…ILRPMLRSGS (393 aa)) are extracellular. Residues Asp-36 and Thr-72 each contribute to the Zn(2+) site. Residues 69 to 75 (VTMTSPC) are required for enzyme activity. The Nucleophile role is filled by Thr-72. Asn-93 is a binding site for substrate. Asn-97, Asn-118, Asn-143, and Asn-165 each carry an N-linked (GlcNAc...) asparagine glycan. Zn(2+) is bound by residues Asp-196, His-200, Asp-243, and His-244. Asn-264 carries N-linked (GlcNAc...) asparagine glycosylation. His-350 contributes to the Zn(2+) binding site. A helical membrane pass occupies residues 415-435 (ASLLSSQHHLVALLVGILTCL). The Cytoplasmic segment spans residues 436–439 (AKVL).

Requires Zn(2+) as cofactor. In terms of processing, N-glycosylated; required for activity and transport to the plasma membrane. As to expression, expressed in liver and small intestine.

The protein resides in the cell membrane. It catalyses the reaction a sphingomyelin + H2O = phosphocholine + an N-acylsphing-4-enine + H(+). The catalysed reaction is a 1-O-alkyl-2-acetyl-sn-glycero-3-phosphocholine + H2O = a 1-O-alkyl-2-acetyl-sn-glycerol + phosphocholine + H(+). It carries out the reaction 1-O-octadecyl-2-acetyl-sn-glycero-3-phosphocholine + H2O = 1-O-octadecyl-2-acetyl-sn-glycerol + phosphocholine + H(+). The enzyme catalyses 1-hexadecanoyl-sn-glycero-3-phosphocholine + H2O = 1-hexadecanoyl-sn-glycerol + phosphocholine + H(+). Functionally, choline-specific phosphodiesterase that hydrolyzes sphingomyelin releasing the ceramide and phosphocholine and therefore is involved in sphingomyelin digestion, ceramide formation, and fatty acid (FA) absorption in the gastrointestinal tract. Also has phospholipase C activity and can also cleave phosphocholine from palmitoyl lyso-phosphatidylcholine and platelet-activating factor (PAF) leading to its inactivation. Does not have nucleotide pyrophosphatase activity. May promote cholesterol absorption by affecting the levels of sphingomyelin derived from either diet or endogenous sources, in the intestinal lumen. The protein is Ectonucleotide pyrophosphatase/phosphodiesterase family member 7 of Mus musculus (Mouse).